We begin with the raw amino-acid sequence, 358 residues long: uncharacterized protein (358 aa).

Position 207–214 (207–214 (AAVKDGKT)) interacts with ATP.

This is an uncharacterized protein from Bacillus subtilis (strain 168).